Here is a 257-residue protein sequence, read N- to C-terminus: Diphthine synthase (257 aa).

Residues isoleucine 11, aspartate 89, isoleucine 92, 117 to 118, leucine 169, leucine 210, and histidine 235 contribute to the S-adenosyl-L-methionine site; that span reads SV.

The protein belongs to the diphthine synthase family. As to quaternary structure, homodimer.

The enzyme catalyses 2-[(3S)-amino-3-carboxypropyl]-L-histidyl-[translation elongation factor 2] + 3 S-adenosyl-L-methionine = diphthine-[translation elongation factor 2] + 3 S-adenosyl-L-homocysteine + 3 H(+). Its pathway is protein modification; peptidyl-diphthamide biosynthesis. In terms of biological role, S-adenosyl-L-methionine-dependent methyltransferase that catalyzes the trimethylation of the amino group of the modified target histidine residue in translation elongation factor 2 (EF-2), to form an intermediate called diphthine. The three successive methylation reactions represent the second step of diphthamide biosynthesis. The chain is Diphthine synthase from Saccharolobus islandicus (strain L.S.2.15 / Lassen #1) (Sulfolobus islandicus).